The primary structure comprises 573 residues: uncharacterized protein (573 aa).

This is an uncharacterized protein from Treponema pallidum (strain Nichols).